The chain runs to 95 residues: Protein TusB (95 aa).

The protein belongs to the DsrH/TusB family. In terms of assembly, heterohexamer, formed by a dimer of trimers. The hexameric TusBCD complex contains 2 copies each of TusB, TusC and TusD. The TusBCD complex interacts with TusE.

It localises to the cytoplasm. Functionally, part of a sulfur-relay system required for 2-thiolation of 5-methylaminomethyl-2-thiouridine (mnm(5)s(2)U) at tRNA wobble positions. This is Protein TusB from Serratia proteamaculans (strain 568).